The following is a 164-amino-acid chain: Transcription elongation factor GreA (164 aa).

Positions 50 to 76 form a coiled coil; the sequence is YHAAREEQGQQEARIRQLQDLLSNAKV.

The protein belongs to the GreA/GreB family.

In terms of biological role, necessary for efficient RNA polymerase transcription elongation past template-encoded arresting sites. The arresting sites in DNA have the property of trapping a certain fraction of elongating RNA polymerases that pass through, resulting in locked ternary complexes. Cleavage of the nascent transcript by cleavage factors such as GreA or GreB allows the resumption of elongation from the new 3'terminus. GreA releases sequences of 2 to 3 nucleotides. This is Transcription elongation factor GreA from Mycobacterium bovis (strain ATCC BAA-935 / AF2122/97).